The primary structure comprises 603 residues: Probable methyltransferase-like protein 25 (603 aa).

The disordered stretch occupies residues 326–352 (TSSQQIPNRETSEANKERRKMTSKSSE).

Its function is as follows. Probable methyltransferase. The polypeptide is Probable methyltransferase-like protein 25 (METTL25) (Homo sapiens (Human)).